The primary structure comprises 271 residues: Dipeptidyl-peptidase 6 (271 aa).

2 consecutive SH3b domains span residues 1-64 and 72-140; these read MNAI…LFDD and QKAQ…HPKI. One can recognise a NlpC/P60 domain in the interval 148-268; it reads HAFRENVVQT…DLATTITAIG (121 aa). Catalysis depends on Cys-178, which acts as the Nucleophile. The active-site Proton acceptor is the His-224. Residue His-236 is part of the active site.

Belongs to the peptidase C40 family.

The protein resides in the cytoplasm. Its function is as follows. Involved in cell sporulation. Hydrolyzes gamma-D-Glu-L-(meso)A2pm linkages only in those peptide units that have a free N-terminal L-alanine. The sequence is that of Dipeptidyl-peptidase 6 from Lysinibacillus sphaericus (Bacillus sphaericus).